The chain runs to 341 residues: Adenine deaminase (341 aa).

Zn(2+) is bound by residues H17, H19, and H197. Residue E200 is the Proton donor of the active site. Zn(2+) is bound at residue D278. Position 279 (D279) interacts with substrate.

This sequence belongs to the metallo-dependent hydrolases superfamily. Adenosine and AMP deaminases family. Adenine deaminase type 2 subfamily. The cofactor is Zn(2+).

The catalysed reaction is adenine + H2O + H(+) = hypoxanthine + NH4(+). Functionally, catalyzes the hydrolytic deamination of adenine to hypoxanthine. Plays an important role in the purine salvage pathway and in nitrogen catabolism. The chain is Adenine deaminase from Chlorobium luteolum (strain DSM 273 / BCRC 81028 / 2530) (Pelodictyon luteolum).